The following is a 240-amino-acid chain: MGKAQPLPILITGGGRRIGLALAWHFINQKQPVIISYRTHYPAIDGLINAGAQCIQADFSTNDGVMAFADEVLKSTHGLRAILHNASAWMAEKPGTSLTDVLACMMQIHVNTPYLLNHALERLLRGHGHAASDIIHFTDYVVERGSDKHIAYAASKAALDNMTRSFARKLAPEVKVNSIAPSLILFNEHDDAEYRQQALNKSLMKTAPGEKEVIDLVDYLLTSCFVTGRSFPLDGGRHLR.

Catalysis depends on tyrosine 152, which acts as the Proton acceptor.

Belongs to the short-chain dehydrogenases/reductases (SDR) family. FolM subfamily.

The catalysed reaction is (6S)-5,6,7,8-tetrahydrofolate + NADP(+) = 7,8-dihydrofolate + NADPH + H(+). It catalyses the reaction 7,8-dihydromonapterin + NADPH + H(+) = 5,6,7,8-tetrahydromonapterin + NADP(+). Its function is as follows. Catalyzes the reduction of dihydromonapterin to tetrahydromonapterin. Also has lower activity with dihydrofolate. This is Dihydromonapterin reductase (folM) from Escherichia coli (strain SMS-3-5 / SECEC).